Reading from the N-terminus, the 663-residue chain is Chaperone protein HtpG (663 aa).

Positions 1-352 (MTKQTLSFQA…SADLPLNVSR (352 aa)) are a; substrate-binding. A compositionally biased stretch (basic and acidic residues) spans 218 to 228 (ELINPSDEKGG). A disordered region spans residues 218–237 (ELINPSDEKGGRQPGGMVKT). Residues 353–595 (ELLQESRDVK…DHGMSTQLAR (243 aa)) form a b region. The c stretch occupies residues 596–663 (MLKQAGQAAP…YVKRVNALLV (68 aa)).

It belongs to the heat shock protein 90 family. Homodimer.

It is found in the cytoplasm. In terms of biological role, molecular chaperone. Has ATPase activity. This Albidiferax ferrireducens (strain ATCC BAA-621 / DSM 15236 / T118) (Rhodoferax ferrireducens) protein is Chaperone protein HtpG.